We begin with the raw amino-acid sequence, 332 residues long: MKVSFEQLKAAFNRVLLSRGVAVETADACAEMFARTTESGVYSHGVNRFPRFIQQLDNGDIIPDAEAKRITTLGAIEQWDAQRSIGNLTAKKMMDRAIELAADHGIGLVALRNANHWMRGGSYGWQAAEKGYIGICWTNSIAVMPPWGAKECRIGTNPLIVAIPSTPITMVDMSMSMFSYGMLEVNRLAGRQLPVDGGFDDEGNLTKEPGVIEKNRRILPMGYWKGSGMSIVLDMIATLLSDGASVAEVTQDNSDEYGVSQIFIAIEVDKLIDGPTRDAKLQRIMDYVTTAERADENQAIRLPGHEFTTLLAENRRNGITVDDSVWAKIQAL.

His44 functions as the Proton donor in the catalytic mechanism. NAD(+)-binding positions include Ile168–Ser174, Trp224–Lys225, and Gly304–Glu306.

Belongs to the LDH2/MDH2 oxidoreductase family. DlgD subfamily. As to quaternary structure, homodimer.

The protein localises to the cytoplasm. It carries out the reaction 3-dehydro-L-gulonate + NAD(+) = 2,3-dioxo-L-gulonate + NADH + H(+). The catalysed reaction is 3-dehydro-L-gulonate + NADP(+) = 2,3-dioxo-L-gulonate + NADPH + H(+). Functionally, catalyzes the reduction of 2,3-diketo-L-gulonate in the presence of NADH, to form 3-keto-L-gulonate. In Escherichia fergusonii (strain ATCC 35469 / DSM 13698 / CCUG 18766 / IAM 14443 / JCM 21226 / LMG 7866 / NBRC 102419 / NCTC 12128 / CDC 0568-73), this protein is 2,3-diketo-L-gulonate reductase.